The chain runs to 308 residues: Ribosomal protein L11 methyltransferase (308 aa).

S-adenosyl-L-methionine is bound by residues Thr157, Gly178, Asp200, and Asn243.

Belongs to the methyltransferase superfamily. PrmA family.

It is found in the cytoplasm. The catalysed reaction is L-lysyl-[protein] + 3 S-adenosyl-L-methionine = N(6),N(6),N(6)-trimethyl-L-lysyl-[protein] + 3 S-adenosyl-L-homocysteine + 3 H(+). In terms of biological role, methylates ribosomal protein L11. This Pelotomaculum thermopropionicum (strain DSM 13744 / JCM 10971 / SI) protein is Ribosomal protein L11 methyltransferase.